Reading from the N-terminus, the 237-residue chain is tRNA1(Val) (adenine(37)-N6)-methyltransferase (237 aa).

The protein belongs to the methyltransferase superfamily. tRNA (adenine-N(6)-)-methyltransferase family.

Its subcellular location is the cytoplasm. It carries out the reaction adenosine(37) in tRNA1(Val) + S-adenosyl-L-methionine = N(6)-methyladenosine(37) in tRNA1(Val) + S-adenosyl-L-homocysteine + H(+). Functionally, specifically methylates the adenine in position 37 of tRNA(1)(Val) (anticodon cmo5UAC). The chain is tRNA1(Val) (adenine(37)-N6)-methyltransferase from Bacteroides fragilis (strain ATCC 25285 / DSM 2151 / CCUG 4856 / JCM 11019 / LMG 10263 / NCTC 9343 / Onslow / VPI 2553 / EN-2).